The chain runs to 730 residues: Multifunctional procollagen lysine hydroxylase and glycosyltransferase (730 aa).

The signal sequence occupies residues M1–A16. The tract at residues T20–E280 is required for glycosyltransferase activity. UDP contacts are provided by residues V30–T32 and D98–Y100. D98, D101, and H242 together coordinate Mn(2+). UDP is bound at residue G245–K248. C268 and C271 form a disulfide bridge. The accessory region stretch occupies residues V281–E507. C554 and C690 form a disulfide bridge. The 2-oxoglutarate site is built by R590 and Y648. The Fe2OG dioxygenase domain occupies E639–P730. Fe cation-binding residues include H659 and D661. The segment at T664–L707 is important for dimerization. The N-linked (GlcNAc...) asparagine glycan is linked to N689. H711 serves as a coordination point for Fe cation. R721 serves as a coordination point for 2-oxoglutarate.

Homodimer. Fe(2+) serves as cofactor. The cofactor is L-ascorbate. Requires Mn(2+) as cofactor.

Its subcellular location is the rough endoplasmic reticulum. It is found in the endoplasmic reticulum lumen. It localises to the endoplasmic reticulum membrane. The protein resides in the secreted. The protein localises to the extracellular space. It carries out the reaction L-lysyl-[collagen] + 2-oxoglutarate + O2 = (5R)-5-hydroxy-L-lysyl-[collagen] + succinate + CO2. It catalyses the reaction (5R)-5-hydroxy-L-lysyl-[collagen] + UDP-alpha-D-galactose = (5R)-5-O-(beta-D-galactosyl)-5-hydroxy-L-lysyl-[collagen] + UDP + H(+). The enzyme catalyses (5R)-5-O-(beta-D-galactosyl)-5-hydroxy-L-lysyl-[collagen] + UDP-alpha-D-glucose = (5R)-5-O-[alpha-D-glucosyl-(1-&gt;2)-beta-D-galactosyl]-5-hydroxy-L-lysyl-[collagen] + UDP + H(+). Multifunctional enzyme that catalyzes a series of post-translational modifications on Lys residues in procollagen. Catalyzes the formation of hydroxylysine residues in -Xaa-Lys-Gly- sequences in type IV collagens. Transfers galactose onto hydroxylysine groups, giving rise to galactosyl 5-hydroxylysine. Catalyzes the subsequent transfer of glucose moieties, giving rise to 1,2-glucosylgalactosyl-5-hydroxylysine residues. Essential for normal biosynthesis and secretion of type IV collagens. Essential for normal stability of the basement membrane. The protein is Multifunctional procollagen lysine hydroxylase and glycosyltransferase (let-268) of Caenorhabditis elegans.